An 87-amino-acid chain; its full sequence is MFVVLVYDTAAERNPNALRTCRKYLHWVQRSVFEGELSAAQYRALMTTLRDQLDLTYDSIRVYRTRSPALVETEWLGVPLGNQDSVL.

Position 8 (Asp8) interacts with Mg(2+).

Belongs to the CRISPR-associated endoribonuclease Cas2 protein family. As to quaternary structure, homodimer, forms a heterotetramer with a Cas1 homodimer. Mg(2+) is required as a cofactor.

In terms of biological role, CRISPR (clustered regularly interspaced short palindromic repeat), is an adaptive immune system that provides protection against mobile genetic elements (viruses, transposable elements and conjugative plasmids). CRISPR clusters contain sequences complementary to antecedent mobile elements and target invading nucleic acids. CRISPR clusters are transcribed and processed into CRISPR RNA (crRNA). Functions as a ssRNA-specific endoribonuclease. Involved in the integration of spacer DNA into the CRISPR cassette. The protein is CRISPR-associated endoribonuclease Cas2 of Frankia alni (strain DSM 45986 / CECT 9034 / ACN14a).